We begin with the raw amino-acid sequence, 238 residues long: MESIEEFEKRLGYRFQNKNLLIEALTHKSYKKPYNNERLEFLGDAVLDLVIGEFLFLKFPKADEGELSKMRASLVNEKGFAKLAERVSLGRHIFISNAEENNKGREKPSLLSNAFEATMGAIYLETGLSVVREVVHRLLDEVYPKIDLGSLFRDYKTALQELTQAKFGETPEYVILGSSGPDHKKEFEVAVCVLGSEYARACGSSKKEAQQEAARIALEIFHRKEKEAKESALKGKSE.

An RNase III domain is found at 4 to 127 (IEEFEKRLGY…TMGAIYLETG (124 aa)). Residue Glu-40 participates in Mg(2+) binding. Asp-44 is a catalytic residue. Mg(2+) is bound by residues Asn-113 and Glu-116. Glu-116 is an active-site residue. The DRBM domain occupies 154–223 (DYKTALQELT…ARIALEIFHR (70 aa)).

This sequence belongs to the ribonuclease III family. Homodimer. Requires Mg(2+) as cofactor.

It is found in the cytoplasm. The enzyme catalyses Endonucleolytic cleavage to 5'-phosphomonoester.. Digests double-stranded RNA. Involved in the processing of primary rRNA transcript to yield the immediate precursors to the large and small rRNAs (23S and 16S). Processes some mRNAs, and tRNAs when they are encoded in the rRNA operon. Processes pre-crRNA and tracrRNA of type II CRISPR loci if present in the organism. The chain is Ribonuclease 3 from Wolinella succinogenes (strain ATCC 29543 / DSM 1740 / CCUG 13145 / JCM 31913 / LMG 7466 / NCTC 11488 / FDC 602W) (Vibrio succinogenes).